A 202-amino-acid chain; its full sequence is Putative 3-methyladenine DNA glycosylase (202 aa).

It belongs to the DNA glycosylase MPG family.

The sequence is that of Putative 3-methyladenine DNA glycosylase from Staphylococcus haemolyticus (strain JCSC1435).